We begin with the raw amino-acid sequence, 89 residues long: Small ribosomal subunit protein uS14 (89 aa).

The protein belongs to the universal ribosomal protein uS14 family. Part of the 30S ribosomal subunit. Contacts proteins S3 and S10.

Binds 16S rRNA, required for the assembly of 30S particles and may also be responsible for determining the conformation of the 16S rRNA at the A site. The chain is Small ribosomal subunit protein uS14 from Shouchella clausii (strain KSM-K16) (Alkalihalobacillus clausii).